The sequence spans 465 residues: ATP-dependent protease ATPase subunit HslU (465 aa).

Residues Val-18, 60 to 65 (GVGKTE), Asp-277, Glu-342, and Arg-414 contribute to the ATP site.

The protein belongs to the ClpX chaperone family. HslU subfamily. In terms of assembly, a double ring-shaped homohexamer of HslV is capped on each side by a ring-shaped HslU homohexamer. The assembly of the HslU/HslV complex is dependent on binding of ATP.

The protein resides in the cytoplasm. In terms of biological role, ATPase subunit of a proteasome-like degradation complex; this subunit has chaperone activity. The binding of ATP and its subsequent hydrolysis by HslU are essential for unfolding of protein substrates subsequently hydrolyzed by HslV. HslU recognizes the N-terminal part of its protein substrates and unfolds these before they are guided to HslV for hydrolysis. This chain is ATP-dependent protease ATPase subunit HslU, found in Caldicellulosiruptor saccharolyticus (strain ATCC 43494 / DSM 8903 / Tp8T 6331).